Reading from the N-terminus, the 62-residue chain is Potassium channel toxin alpha-KTx 6.21 (62 aa).

The N-terminal stretch at 1 to 24 (MNAKLIYLLLVVTTMMLTFDTTQA) is a signal peptide. 4 disulfides stabilise this stretch: cysteine 29-cysteine 50, cysteine 35-cysteine 55, cysteine 39-cysteine 57, and cysteine 45-cysteine 60. Position 61 is a valine amide (valine 61).

The protein belongs to the short scorpion toxin superfamily. Potassium channel inhibitor family. Alpha-KTx 06 subfamily. Post-translationally, C-terminal amidation is important for activity. There is a 50-70-fold decrease in ability to inhibit Kv1.2/KCNA2 when the toxin is not amidated. This decrease may be explained by a 23-fold slower association rate (k(on)) together with a 2-fold faster dissociation rate (k(off)). As to expression, expressed by the venom gland.

It is found in the secreted. Functionally, reversible blocker of voltage-gated potassium channels with fast binding and unbinding kinetics. Has highest activity on human voltage-gated potassium channel Kv1.2/KCNA2 channels (IC(50)=0.11-0.16 nM), whereas its affinity for other channels tested was in the nanomolar range (hKv1.1/KCNA1, IC(50)=253 nM; hKv1.3/KCNA3, IC(50)=91 nM; and hKCa3.1/KCNN4, IC(50)=70 nM). The sequence is that of Potassium channel toxin alpha-KTx 6.21 from Urodacus yaschenkoi (Inland robust scorpion).